Consider the following 834-residue polypeptide: ATP-dependent RNA helicase ddx23 (834 aa).

Disordered regions lie at residues 1–245 (MDPP…TQFS) and 322–371 (FGGY…GKQI). The span at 10–25 (SKRDTKKKDEVNKEQP) shows a compositional bias: basic and acidic residues. Positions 42 to 54 (SNPTQEEPTNTLQ) are enriched in polar residues. Composition is skewed to basic and acidic residues over residues 70–110 (GLKE…DYRD), 117–164 (GRDR…RRDG), 171–205 (RRRDERRENSGRRDYRDNDRRDDRRDNGRYGRDND), and 231–245 (DIHKDRIKRDTTQFS). The segment covering 328–362 (NNNNNGNHYNGNIYNNNNNNNNNNNNNNNINNNNN) has biased composition (low complexity). A Q motif motif is present at residues 413 to 441 (RTWQESNLPREILEAIRQLGYEKPSPIQM). A Helicase ATP-binding domain is found at 444–643 (IPISLTGRDI…KKYLRRPCTI (200 aa)). 457–464 (AETGSGKT) provides a ligand contact to ATP. The DEAD box signature appears at 570 to 573 (DEAD). Positions 654 to 815 (RIRQTVIFVK…IVPIELLKHP (162 aa)) constitute a Helicase C-terminal domain. The tract at residues 813–834 (KHPSSQQKHGSSKDHNKSVIFK) is disordered. A compositionally biased stretch (basic and acidic residues) spans 823 to 834 (SSKDHNKSVIFK).

This sequence belongs to the DEAD box helicase family. DDX23/PRP28 subfamily.

It localises to the cytoplasm. The protein localises to the nucleus. It carries out the reaction ATP + H2O = ADP + phosphate + H(+). Functionally, probable ATP-dependent RNA helicase which may be involved in mRNA splicing. This chain is ATP-dependent RNA helicase ddx23 (helB2), found in Dictyostelium discoideum (Social amoeba).